The chain runs to 346 residues: GTPase Obg (346 aa).

The Obg domain occupies Met1–Ile158. Residues Ala159–Arg327 enclose the OBG-type G domain. Residues Gly165 to Ser172, Phe190 to Ala194, Asp212 to Gly215, Asn279 to Asp282, and Ser308 to Phe310 each bind GTP. Ser172 and Thr192 together coordinate Mg(2+).

This sequence belongs to the TRAFAC class OBG-HflX-like GTPase superfamily. OBG GTPase family. Monomer. It depends on Mg(2+) as a cofactor.

Its subcellular location is the cytoplasm. In terms of biological role, an essential GTPase which binds GTP, GDP and possibly (p)ppGpp with moderate affinity, with high nucleotide exchange rates and a fairly low GTP hydrolysis rate. Plays a role in control of the cell cycle, stress response, ribosome biogenesis and in those bacteria that undergo differentiation, in morphogenesis control. The chain is GTPase Obg from Phenylobacterium zucineum (strain HLK1).